A 152-amino-acid polypeptide reads, in one-letter code: Transcriptional repressor NrdR (152 aa).

A zinc finger lies at 3–34; that stretch reads CPFCHNEQSRVIDSRVIDSGTSIRRRRECAAC. The 91-residue stretch at 46–136 folds into the ATP-cone domain; that stretch reads LSVVKRNGLA…VYKSFESADD (91 aa).

The protein belongs to the NrdR family. The cofactor is Zn(2+).

In terms of biological role, negatively regulates transcription of bacterial ribonucleotide reductase nrd genes and operons by binding to NrdR-boxes. In Corynebacterium aurimucosum (strain ATCC 700975 / DSM 44827 / CIP 107346 / CN-1) (Corynebacterium nigricans), this protein is Transcriptional repressor NrdR.